We begin with the raw amino-acid sequence, 136 residues long: Calcitonin (136 aa).

A signal peptide spans 1–25; sequence MGFLKFSPFLVVSILLLYQACGLQA. A propeptide spanning residues 26 to 82 is cleaved from the precursor; it reads VPLRSTLESSPGMATLSEEEARLLAALVQNYMQMKVRELEQEEEQEAEGSSLDSPRS. Residue serine 42 is modified to Phosphoserine. Residues 64–84 form a disordered region; it reads LEQEEEQEAEGSSLDSPRSKR. Cysteine 85 and cysteine 91 are disulfide-bonded. N-linked (GlcNAc...) asparagine glycosylation is present at asparagine 87. The segment at 114–136 is disordered; the sequence is GAPGKKRDMAKDLETNHHPYFGN. Residue proline 116 is modified to Proline amide. Positions 118–130 are enriched in basic and acidic residues; it reads KKRDMAKDLETNH. The propeptide occupies 121–136; the sequence is DMAKDLETNHHPYFGN.

Belongs to the calcitonin family.

The protein localises to the secreted. Calcitonin is a peptide hormone that causes a rapid but short-lived drop in the level of calcium and phosphate in blood by promoting the incorporation of those ions in the bones. Calcitonin function is mediated by the calcitonin receptor/CALCR and the CALCR-RAMP2 (AMYR2) receptor complex. This chain is Calcitonin, found in Rattus norvegicus (Rat).